Reading from the N-terminus, the 60-residue chain is Cytotoxin 1 (60 aa).

Disulfide bonds link Cys3–Cys21, Cys14–Cys38, Cys42–Cys53, and Cys54–Cys59.

Belongs to the three-finger toxin family. Short-chain subfamily. Type IA cytotoxin sub-subfamily. As to quaternary structure, monomer in solution; Homodimer and oligomer in the presence of negatively charged lipids forming a pore with a size ranging between 20 and 30 Angstroms. As to expression, expressed by the venom gland.

It is found in the secreted. Its subcellular location is the target cell membrane. Its function is as follows. Shows cytolytic activity on many different cells by forming pore in lipid membranes. In vivo, increases heart rate or kills the animal by cardiac arrest. In addition, it binds to heparin with high affinity, interacts with Kv channel-interacting protein 1 (KCNIP1) in a calcium-independent manner, and binds to integrin alpha-V/beta-3 (ITGAV/ITGB3) with moderate affinity. The protein is Cytotoxin 1 of Naja melanoleuca (Forest cobra).